The following is a 231-amino-acid chain: 5'-methylthioadenosine/S-adenosylhomocysteine nucleosidase (231 aa).

Catalysis depends on E12, which acts as the Proton acceptor. Residues G78, M153, and 174–175 (ME) each bind substrate. D198 serves as the catalytic Proton donor.

It belongs to the PNP/UDP phosphorylase family. MtnN subfamily.

It carries out the reaction S-adenosyl-L-homocysteine + H2O = S-(5-deoxy-D-ribos-5-yl)-L-homocysteine + adenine. The enzyme catalyses S-methyl-5'-thioadenosine + H2O = 5-(methylsulfanyl)-D-ribose + adenine. It catalyses the reaction 5'-deoxyadenosine + H2O = 5-deoxy-D-ribose + adenine. The protein operates within amino-acid biosynthesis; L-methionine biosynthesis via salvage pathway; S-methyl-5-thio-alpha-D-ribose 1-phosphate from S-methyl-5'-thioadenosine (hydrolase route): step 1/2. Catalyzes the irreversible cleavage of the glycosidic bond in both 5'-methylthioadenosine (MTA) and S-adenosylhomocysteine (SAH/AdoHcy) to adenine and the corresponding thioribose, 5'-methylthioribose and S-ribosylhomocysteine, respectively. Also cleaves 5'-deoxyadenosine, a toxic by-product of radical S-adenosylmethionine (SAM) enzymes, into 5-deoxyribose and adenine. The polypeptide is 5'-methylthioadenosine/S-adenosylhomocysteine nucleosidase (Bacillus thuringiensis subsp. konkukian (strain 97-27)).